We begin with the raw amino-acid sequence, 779 residues long: Cysteine-rich protein 2-binding protein (779 aa).

A disordered region spans residues 1–34; it reads MDSSIHLSGLLSRHDDDATRTSTSEGLEEGEVEG. A Phosphoserine modification is found at S4. K230 is subject to N6-acetyllysine. 3 disordered regions span residues 247–292, 314–345, and 360–457; these read SRNP…PVKF, LSSSDRTPLTSPSPSPSLDFSAPGTPASHSAT, and PPQA…GPRY. Residues 255–275 are compositionally biased toward basic and acidic residues; it reads MELKEKRSRTQEAKDIRRAQK. S284 carries the phosphoserine modification. Residue K291 is modified to N6-acetyllysine. The segment covering 314-334 has biased composition (low complexity); it reads LSSSDRTPLTSPSPSPSLDFS. Basic and acidic residues-rich tracts occupy residues 402-423 and 443-452; these read RAPEQIKQEVDSEEEKPDRMDG and KPPLEKDMKP. A Phosphoserine modification is found at S413. Residues 635–779 enclose the N-acetyltransferase domain; sequence LDYCYVRPNH…KHAFFLRLRR (145 aa).

Interacts with the LIM 1 domain of CSRP2. Component of the ADA2A-containing complex (ATAC), composed of CSRP2BP, KAT2A, TADA2L, TADA3L, ZZ3, MBIP, WDR5, YEATS2, CCDC101 and DR1. In the complex, it probably interacts directly with KAT2A, MBIP and WDR5.

The protein localises to the nucleus. It is found in the cytoplasm. In terms of biological role, component of the ATAC complex, a complex with histone acetyltransferase activity on histones H3 and H4. May function as a scaffold for the ATAC complex to promote ATAC complex stability. Has also weak histone acetyltransferase activity toward histone H4. Required for the normal progression through G1 and G2/M phases of the cell cycle. In Mus musculus (Mouse), this protein is Cysteine-rich protein 2-binding protein.